We begin with the raw amino-acid sequence, 155 residues long: Interleukin-2 (155 aa).

The first 20 residues, 1-20 (MYKIQLLSCIALTLALVANG), serve as a signal peptide directing secretion. Thr23 carries O-linked (GalNAc...) threonine glycosylation. A disulfide bridge connects residues Cys79 and Cys127.

Belongs to the IL-2 family.

The protein localises to the secreted. Its function is as follows. Cytokine produced by activated CD4-positive helper T-cells and to a lesser extend activated CD8-positive T-cells and natural killer (NK) cells that plays pivotal roles in the immune response and tolerance. Binds to a receptor complex composed of either the high-affinity trimeric IL-2R (IL2RA/CD25, IL2RB/CD122 and IL2RG/CD132) or the low-affinity dimeric IL-2R (IL2RB and IL2RG). Interaction with the receptor leads to oligomerization and conformation changes in the IL-2R subunits resulting in downstream signaling starting with phosphorylation of JAK1 and JAK3. In turn, JAK1 and JAK3 phosphorylate the receptor to form a docking site leading to the phosphorylation of several substrates including STAT5. This process leads to activation of several pathways including STAT, phosphoinositide-3-kinase/PI3K and mitogen-activated protein kinase/MAPK pathways. Functions as a T-cell growth factor and can increase NK-cell cytolytic activity as well. Promotes strong proliferation of activated B-cells and subsequently immunoglobulin production. Plays a pivotal role in regulating the adaptive immune system by controlling the survival and proliferation of regulatory T-cells, which are required for the maintenance of immune tolerance. Moreover, participates in the differentiation and homeostasis of effector T-cell subsets, including Th1, Th2, Th17 as well as memory CD8-positive T-cells. The sequence is that of Interleukin-2 (IL2) from Moschus berezovskii (Chinese forest musk deer).